The primary structure comprises 61 residues: Small ribosomal subunit protein uS14 (61 aa).

Zn(2+) contacts are provided by Cys-24, Cys-27, Cys-40, and Cys-43.

Belongs to the universal ribosomal protein uS14 family. Zinc-binding uS14 subfamily. As to quaternary structure, part of the 30S ribosomal subunit. Contacts proteins S3 and S10. The cofactor is Zn(2+).

Binds 16S rRNA, required for the assembly of 30S particles and may also be responsible for determining the conformation of the 16S rRNA at the A site. The chain is Small ribosomal subunit protein uS14 from Deinococcus deserti (strain DSM 17065 / CIP 109153 / LMG 22923 / VCD115).